The following is a 736-amino-acid chain: Na(+)/H(+) antiporter NhaA (736 aa).

Residues Met-1–Ala-387 are na(+)/H(+) antiporter NhaA. 12 helical membrane passes run Ala-23–Phe-43, Leu-58–Leu-78, Met-96–Leu-116, Gly-126–Gly-146, Val-155–Phe-175, Ala-178–Met-198, Met-201–Phe-221, Gly-224–Pro-244, Val-265–Leu-285, Ile-298–Ile-318, Leu-334–Leu-354, and Ile-367–Ala-387. The interval Arg-388–Leu-736 is peptidase S49.

In the N-terminal section; belongs to the NhaA Na(+)/H(+) (TC 2.A.33) antiporter family. The protein in the C-terminal section; belongs to the peptidase S49 family.

The protein localises to the cell inner membrane. The enzyme catalyses Na(+)(in) + 2 H(+)(out) = Na(+)(out) + 2 H(+)(in). Its function is as follows. Na(+)/H(+) antiporter that extrudes sodium in exchange for external protons. This chain is Na(+)/H(+) antiporter NhaA, found in Brucella abortus (strain 2308).